The primary structure comprises 363 residues: Phosphoserine aminotransferase (363 aa).

Arg-42 is an L-glutamate binding site. Residues 76 to 77 (GR), Trp-102, Thr-156, Asp-175, and Gln-198 contribute to the pyridoxal 5'-phosphate site. Residue Lys-199 is modified to N6-(pyridoxal phosphate)lysine. 240-241 (NT) lines the pyridoxal 5'-phosphate pocket.

Belongs to the class-V pyridoxal-phosphate-dependent aminotransferase family. SerC subfamily. Homodimer. Requires pyridoxal 5'-phosphate as cofactor.

Its subcellular location is the cytoplasm. The enzyme catalyses O-phospho-L-serine + 2-oxoglutarate = 3-phosphooxypyruvate + L-glutamate. It catalyses the reaction 4-(phosphooxy)-L-threonine + 2-oxoglutarate = (R)-3-hydroxy-2-oxo-4-phosphooxybutanoate + L-glutamate. It functions in the pathway amino-acid biosynthesis; L-serine biosynthesis; L-serine from 3-phospho-D-glycerate: step 2/3. Its pathway is cofactor biosynthesis; pyridoxine 5'-phosphate biosynthesis; pyridoxine 5'-phosphate from D-erythrose 4-phosphate: step 3/5. Catalyzes the reversible conversion of 3-phosphohydroxypyruvate to phosphoserine and of 3-hydroxy-2-oxo-4-phosphonooxybutanoate to phosphohydroxythreonine. This Shewanella frigidimarina (strain NCIMB 400) protein is Phosphoserine aminotransferase.